Here is a 336-residue protein sequence, read N- to C-terminus: Ornithine carbamoyltransferase (336 aa).

Carbamoyl phosphate-binding positions include 56 to 59 (STRT), glutamine 83, arginine 107, and 134 to 137 (HPTQ). L-ornithine is bound by residues asparagine 168, aspartate 232, and 236 to 237 (SM). Carbamoyl phosphate-binding positions include 274 to 275 (CL) and arginine 320.

Belongs to the aspartate/ornithine carbamoyltransferase superfamily. OTCase family.

It localises to the cytoplasm. It catalyses the reaction carbamoyl phosphate + L-ornithine = L-citrulline + phosphate + H(+). Its pathway is amino-acid biosynthesis; L-arginine biosynthesis; L-arginine from L-ornithine and carbamoyl phosphate: step 1/3. Functionally, reversibly catalyzes the transfer of the carbamoyl group from carbamoyl phosphate (CP) to the N(epsilon) atom of ornithine (ORN) to produce L-citrulline. This chain is Ornithine carbamoyltransferase, found in Erwinia tasmaniensis (strain DSM 17950 / CFBP 7177 / CIP 109463 / NCPPB 4357 / Et1/99).